The following is a 176-amino-acid chain: METQGASLSLGRWSLWLLLLGLVVPLASAQALSYREAVLRAVGQLNERSSEANLYRLLELDPAPNDEVDPGTRKPVSFTVKETVCPRTTQQPPEECDFKENGLVKQCVGTVTLDPSNDQFDINCNELQSVRFRPPIRRPPIRPPFNPPFRPPVRPPFRPPFRPPFRPPIGPFPGRR.

An N-terminal signal peptide occupies residues 1–29 (METQGASLSLGRWSLWLLLLGLVVPLASA). Gln-30 is subject to Pyrrolidone carboxylic acid. Positions 30–130 (QALSYREAVL…DINCNELQSV (101 aa)) are excised as a propeptide. 2 disulfides stabilise this stretch: Cys-85–Cys-96 and Cys-107–Cys-124. Positions 135 to 176 (PIRRPPIRPPFNPPFRPPVRPPFRPPFRPPFRPPIGPFPGRR) are disordered. The segment covering 141 to 176 (IRPPFNPPFRPPVRPPFRPPFRPPFRPPIGPFPGRR) has biased composition (pro residues). Pro-173 is subject to Proline amide. The propeptide at 174–176 (GRR) is removed in mature form.

Belongs to the cathelicidin family. Post-translationally, elastase is responsible for its maturation.

It localises to the secreted. Functionally, binds to the lipid A moiety of bacterial lipopolysaccharides (LPS), a glycolipid present in the outer membrane of all Gram-negative bacteria. Shows a potent antimicrobial activity against the Gram-negative bacteria E.coli, S.typhimurium and P.aeruginosa. Less active against the Gram-positive bacteria S.aureus, L.monocytogenes and B.subtilis. The chain is Cathelicidin-2 (CATHL2) from Capra hircus (Goat).